The sequence spans 665 residues: Fructose-1,6-bisphosphatase class 3 (665 aa).

The protein belongs to the FBPase class 3 family. The cofactor is Mn(2+).

The catalysed reaction is beta-D-fructose 1,6-bisphosphate + H2O = beta-D-fructose 6-phosphate + phosphate. It functions in the pathway carbohydrate biosynthesis; gluconeogenesis. This is Fructose-1,6-bisphosphatase class 3 from Clostridium novyi (strain NT).